The chain runs to 1427 residues: Protein NPAT (1427 aa).

The tract at residues 1-318 (MLLPSDVARL…EEAIQDILEQ (318 aa)) is interaction with MIZF. The LisH domain occupies 3–35 (LPSDVARLVLGYLQQENLISTCQTFILESSDLK). Required for activation of histone gene transcription and interaction with MIZF regions lie at residues 5-25 (SDVARLVLGYLQQENLISTCQ) and 121-145 (KRQRKLASQTAPASAELLTLPYLSG). The disordered stretch occupies residues 199 to 231 (KKAHASLMSPGRRKSESQRKSTTLSGPHSTIRN). Ser-207 bears the Phosphoserine mark. The segment covering 218–231 (KSTTLSGPHSTIRN) has biased composition (polar residues). Residues 262-338 (KLAENINKFL…FDLFDYGKTK (77 aa)) form a mediates transcriptional activation region. Ser-554 and Ser-599 each carry phosphoserine. Residues 628–644 (SLSSTKQPSNDSASVEL) show a composition bias toward polar residues. Disordered stretches follow at residues 628 to 669 (SLSS…VKEE) and 683 to 732 (EKVA…SAEI). The interval 629-653 (LSSTKQPSNDSASVELNHTENEAQA) is required for acceleration of G1 phase. Low complexity predominate over residues 654-665 (SKSENSQEPSSS). Polar residues predominate over residues 695–711 (VENSHSLPPESVCSSVG). Phosphoserine; by CDK2 is present on residues Ser-775 and Ser-779. Required for acceleration of G1 phase regions lie at residues 828 to 853 (QNEDGIAFSANVTPCVSKDGGYIQLM) and 1039 to 1054 (KSEETTVPFPEESIVP). Disordered regions lie at residues 1095–1121 (FPNLDSPNVSSTLKPPSNNAIKREKEK) and 1133–1152 (SAISRHTTIRETQSEKKVSP). A compositionally biased stretch (polar residues) spans 1097 to 1114 (NLDSPNVSSTLKPPSNNA). Ser-1100 carries the phosphoserine; by CDK2 modification. Residues Lys-1116 and Lys-1149 each participate in a glycyl lysine isopeptide (Lys-Gly) (interchain with G-Cter in SUMO2) cross-link. Basic and acidic residues predominate over residues 1140-1151 (TIRETQSEKKVS). Phosphoserine is present on residues Ser-1151 and Ser-1200. Lys-1228 bears the N6-acetyllysine mark. The segment at 1228–1252 (KDLKQEQTKSASSLITTEMLQDIQR) is required for acceleration of G1 phase. Disordered regions lie at residues 1253 to 1327 (HSSV…SENS) and 1348 to 1413 (SATP…FPAG). The residue at position 1254 (Ser-1254) is a Phosphoserine. Thr-1270 bears the Phosphothreonine; by CDK2 mark. A compositionally biased stretch (basic and acidic residues) spans 1276 to 1285 (GEKHKEEPID). Residue Lys-1280 forms a Glycyl lysine isopeptide (Lys-Gly) (interchain with G-Cter in SUMO2) linkage. The required for acceleration of G1 phase stretch occupies residues 1325–1349 (ENSVNMAAHTLMILSRAAISRTTSA). A compositionally biased stretch (polar residues) spans 1348–1365 (SATPLKDNTQQFRASSRS). Residue Thr-1350 is modified to Phosphothreonine; by CDK2. The span at 1371–1382 (KIEELDERERNS) shows a compositional bias: basic and acidic residues. Over residues 1383-1394 (RPSSKNLTNSSI) the composition is skewed to polar residues. Basic residues predominate over residues 1396–1406 (MKKKKIKKKKL).

This sequence belongs to the NPAT family. In terms of assembly, interacts with the cylin/CDK complexes CCNE1/CDK2 and CCNA1/CDK2. Interacts with BZW1, CASP8AP2, CREBBP, MIZF and YY1. Interacts with the RUVBL1, RUVBL2 and TRRAP subunits of the NuA4 complex. May also interact with GAPDH, NME1, NME2 and STIP1. In terms of processing, phosphorylated at Ser-775, Ser-779, Ser-1100, Thr-1270 and Thr-1350 by CCNE1/CDK2 at G1-S transition and until prophase, which promotes association with histone gene clusters and stimulates activation of histone transcription. Also phosphorylated by CCNA1/CDK2 in vitro. As to expression, ubiquitously expressed.

It is found in the nucleus. It localises to the cajal body. In terms of biological role, required for progression through the G1 and S phases of the cell cycle and for S phase entry. Activates transcription of the histone H2A, histone H2B, histone H3 and histone H4 genes in conjunction with MIZF. Also positively regulates the ATM, MIZF and PRKDC promoters. Transcriptional activation may be accomplished at least in part by the recruitment of the NuA4 histone acetyltransferase (HAT) complex to target gene promoters. The polypeptide is Protein NPAT (NPAT) (Homo sapiens (Human)).